The primary structure comprises 403 residues: Aromatic-L-amino-acid decarboxylase (403 aa).

Threonine 8 lines the substrate pocket. Alanine 74 and serine 75 together coordinate pyridoxal 5'-phosphate. Position 118 (histidine 118) interacts with substrate. Histidine 118 is a catalytic residue. The pyridoxal 5'-phosphate site is built by aspartate 197 and asparagine 226. Lysine 229 is modified (N6-(pyridoxal phosphate)lysine). Residues 250–276 (NAFNVDPLYLKHDMQGSAPDYRHWQIP) are disordered.

Belongs to the group II decarboxylase family. Homodimer. It depends on pyridoxal 5'-phosphate as a cofactor.

The catalysed reaction is L-dopa + H(+) = dopamine + CO2. It carries out the reaction 5-hydroxy-L-tryptophan + H(+) = serotonin + CO2. Its function is as follows. Catalyzes the decarboxylation of L-3,4-dihydroxyphenylalanine (L-DOPA) to dopamine and L-5-hydroxytryptophan (5-HTP) to serotonin. Catalyzes the formation of serotonin more efficiently than dopamine. Displays no activity to tyrosine. Variation in the synthesis of bioamines may be a factor contributing to natural variation in life span. The sequence is that of Aromatic-L-amino-acid decarboxylase (Ddc) from Drosophila lebanonensis (Fruit fly).